The sequence spans 117 residues: Putative pterin-4-alpha-carbinolamine dehydratase (117 aa).

The protein belongs to the pterin-4-alpha-carbinolamine dehydratase family.

The catalysed reaction is (4aS,6R)-4a-hydroxy-L-erythro-5,6,7,8-tetrahydrobiopterin = (6R)-L-erythro-6,7-dihydrobiopterin + H2O. The polypeptide is Putative pterin-4-alpha-carbinolamine dehydratase (Aeromonas salmonicida (strain A449)).